We begin with the raw amino-acid sequence, 163 residues long: D-aminoacyl-tRNA deacylase (163 aa).

The Gly-cisPro motif, important for rejection of L-amino acids motif lies at Gly-141–Pro-142.

This sequence belongs to the DTD family. In terms of assembly, homodimer.

It localises to the cytoplasm. The enzyme catalyses glycyl-tRNA(Ala) + H2O = tRNA(Ala) + glycine + H(+). It catalyses the reaction a D-aminoacyl-tRNA + H2O = a tRNA + a D-alpha-amino acid + H(+). Its function is as follows. An aminoacyl-tRNA editing enzyme that deacylates mischarged D-aminoacyl-tRNAs. Also deacylates mischarged glycyl-tRNA(Ala), protecting cells against glycine mischarging by AlaRS. Acts via tRNA-based rather than protein-based catalysis; rejects L-amino acids rather than detecting D-amino acids in the active site. By recycling D-aminoacyl-tRNA to D-amino acids and free tRNA molecules, this enzyme counteracts the toxicity associated with the formation of D-aminoacyl-tRNA entities in vivo and helps enforce protein L-homochirality. This Neisseria gonorrhoeae (strain ATCC 700825 / FA 1090) protein is D-aminoacyl-tRNA deacylase.